The sequence spans 148 residues: Large ribosomal subunit protein bL9 (148 aa).

It belongs to the bacterial ribosomal protein bL9 family.

Binds to the 23S rRNA. This is Large ribosomal subunit protein bL9 from Aeromonas salmonicida (strain A449).